A 399-amino-acid polypeptide reads, in one-letter code: MFKFSASLAALAALVPFVAAQSPEWGQCGGIGWTGPTTCVAGTTCVESNPYYSQCLPGAASVAPPPPSGTSSAGGSTPSSSAKLHTLAKAAGKLYFGTATDNNELTDTAYTAILDDNTMFGQITPANSMKWDATEPQQGVFTFSGGDQIATLAKTNGMLLRGHNCVWYNQLPSWVSSGSFTAAQLTSIIQNHCSTLVTHYKGQVYAWDVVNEPFNDDGTWRTDVFYNTLGTSYVQIALEAARAADPNAKLYINEYNIEFAGAKATSLLNLVKSLKAADVPLDGIGFQCHLIVGEFSGPGLQTQLSTFAAQGVEVAITELDIRMTLPSTPALLAQQQTDYNSVITACMNVESCIGVTVWDWTDKYSWVPNTFSGQGAACPWDQNFVKKPAFNGIAAGFSA.

The signal sequence occupies residues 1-20; sequence MFKFSASLAALAALVPFVAA. In terms of domain architecture, CBM1 spans 21-56; sequence QSPEWGQCGGIGWTGPTTCVAGTTCVESNPYYSQCL. Residues 81–396 form the GH10 domain; that stretch reads SAKLHTLAKA…KPAFNGIAAG (316 aa). The Proton donor role is filled by Glu-212. Glu-318 serves as the catalytic Nucleophile. Cys-346 and Cys-352 are joined by a disulfide.

It belongs to the glycosyl hydrolase 10 (cellulase F) family.

It is found in the secreted. The enzyme catalyses Endohydrolysis of (1-&gt;4)-beta-D-xylosidic linkages in xylans.. It participates in glycan degradation; xylan degradation. Its function is as follows. Endo-1,4-beta-xylanase involved in the hydrolysis of xylan, a major structural heterogeneous polysaccharide found in plant biomass representing the second most abundant polysaccharide in the biosphere, after cellulose. This is Endo-1,4-beta-xylanase C (xynC) from Phanerodontia chrysosporium (White-rot fungus).